Consider the following 398-residue polypeptide: Putative transposase y4qJ (398 aa).

The protein belongs to the transposase 32 family.

The chain is Putative transposase y4qJ from Sinorhizobium fredii (strain NBRC 101917 / NGR234).